The sequence spans 524 residues: Alkaline phosphatase, tissue-nonspecific isozyme (524 aa).

A signal peptide spans M1–S17. D60 contacts Mg(2+). Zn(2+)-binding residues include D60 and S110. S110 (phosphoserine intermediate) is an active-site residue. S110 carries the post-translational modification Phosphoserine. Cysteines 139 and 201 form a disulfide. N140 carries N-linked (GlcNAc...) asparagine glycosylation. Residue T173 participates in Mg(2+) binding. N-linked (GlcNAc...) asparagine glycosylation occurs at N230. Position 235 (E235) interacts with Ca(2+). An N-linked (GlcNAc...) asparagine glycan is attached at N271. Ca(2+)-binding residues include F290 and E291. N302 carries an N-linked (GlcNAc...) asparagine glycan. D306 contacts Ca(2+). Residue E332 coordinates Mg(2+). Zn(2+) is bound by residues D337, H341, D378, and H379. N430 is a glycosylation site (N-linked (GlcNAc...) asparagine). H454 contacts Zn(2+). The cysteines at positions 489 and 497 are disulfide-linked. S499 is lipidated: GPI-anchor amidated serine. The propeptide at A500–F524 is removed in mature form.

This sequence belongs to the alkaline phosphatase family. As to quaternary structure, homodimer. Requires Mg(2+) as cofactor. Zn(2+) serves as cofactor. It depends on Ca(2+) as a cofactor. N-glycosylated.

The protein resides in the cell membrane. Its subcellular location is the extracellular vesicle membrane. It localises to the mitochondrion membrane. The protein localises to the mitochondrion intermembrane space. The enzyme catalyses a phosphate monoester + H2O = an alcohol + phosphate. It carries out the reaction diphosphate + H2O = 2 phosphate + H(+). The catalysed reaction is pyridoxal 5'-phosphate + H2O = pyridoxal + phosphate. It catalyses the reaction phosphoethanolamine + H2O = ethanolamine + phosphate. The enzyme catalyses N-phosphocreatine + H2O = creatine + phosphate. It carries out the reaction ATP + H2O = ADP + phosphate + H(+). The catalysed reaction is ADP + H2O = AMP + phosphate + H(+). It catalyses the reaction AMP + H2O = adenosine + phosphate. Its activity is regulated as follows. Phosphatase activity is specifically inhibited by 5-((5-chloro-2-methoxyphenyl)sulfonamido)nicotinamide (SBI-425). In terms of biological role, alkaline phosphatase that metabolizes various phosphate compounds and plays a key role in skeletal mineralization and adaptive thermogenesis. Has broad substrate specificity and can hydrolyze a considerable variety of compounds: however, only a few substrates, such as diphosphate (inorganic pyrophosphate; PPi), pyridoxal 5'-phosphate (PLP) and N-phosphocreatine are natural substrates. Plays an essential role in skeletal and dental mineralization via its ability to hydrolyze extracellular diphosphate, a potent mineralization inhibitor, to phosphate: it thereby promotes hydroxyapatite crystal formation and increases inorganic phosphate concentration. Acts in a non-redundant manner with PHOSPHO1 in skeletal mineralization: while PHOSPHO1 mediates the initiation of hydroxyapatite crystallization in the matrix vesicles (MVs), ALPL/TNAP catalyzes the spread of hydroxyapatite crystallization in the extracellular matrix. Also promotes dephosphorylation of osteopontin (SSP1), an inhibitor of hydroxyapatite crystallization in its phosphorylated state; it is however unclear whether ALPL/TNAP mediates SSP1 dephosphorylation via a direct or indirect manner. Catalyzes dephosphorylation of PLP to pyridoxal (PL), the transportable form of vitamin B6, in order to provide a sufficient amount of PLP in the brain, an essential cofactor for enzymes catalyzing the synthesis of diverse neurotransmitters. Additionally, also able to mediate ATP degradation in a stepwise manner to adenosine, thereby regulating the availability of ligands for purinergic receptors. Also capable of dephosphorylating microbial products, such as lipopolysaccharides (LPS) as well as other phosphorylated small-molecules, such as poly-inosine:cytosine (poly I:C). Acts as a key regulator of adaptive thermogenesis as part of the futile creatine cycle: localizes to the mitochondria of thermogenic fat cells and acts by mediating hydrolysis of N-phosphocreatine to initiate a futile cycle of creatine dephosphorylation and phosphorylation. During the futile creatine cycle, creatine and N-phosphocreatine are in a futile cycle, which dissipates the high energy charge of N-phosphocreatine as heat without performing any mechanical or chemical work. The sequence is that of Alkaline phosphatase, tissue-nonspecific isozyme (ALPL) from Felis catus (Cat).